A 202-amino-acid chain; its full sequence is Peptide deformylase 2 (202 aa).

Residues Cys123 and His165 each coordinate Fe cation. Glu166 is a catalytic residue. His169 contacts Fe cation.

Belongs to the polypeptide deformylase family. Fe(2+) serves as cofactor.

It carries out the reaction N-terminal N-formyl-L-methionyl-[peptide] + H2O = N-terminal L-methionyl-[peptide] + formate. Functionally, removes the formyl group from the N-terminal Met of newly synthesized proteins. Requires at least a dipeptide for an efficient rate of reaction. N-terminal L-methionine is a prerequisite for activity but the enzyme has broad specificity at other positions. The sequence is that of Peptide deformylase 2 from Vibrio vulnificus (strain YJ016).